Here is a 241-residue protein sequence, read N- to C-terminus: Small ribosomal subunit protein uS2 (241 aa).

Belongs to the universal ribosomal protein uS2 family.

This chain is Small ribosomal subunit protein uS2, found in Enterobacter sp. (strain 638).